A 570-amino-acid chain; its full sequence is Pre-mRNA 3'-end-processing factor FIP1 (570 aa).

Basic and acidic residues predominate over residues 1-10; sequence MSAEEADKTT. A disordered region spans residues 1-107; sequence MSAEEADKTT…SDDDDDDVRV (107 aa). The segment covering 16-38 has biased composition (acidic residues); it reads AGDEEEEWLYGDEGESKETEEEE. Positions 56–77 are enriched in low complexity; sequence DAPTTTNNSSDSATPPTTTTTT. The segment covering 87–104 has biased composition (acidic residues); the sequence is APGEDEDSESDSDDDDDD. Phosphothreonine is present on Thr-125. Ser-247 is subject to Phosphoserine. Disordered stretches follow at residues 300 to 328, 371 to 400, and 418 to 570; these read RRRH…VQKM, PNFP…YDGR, and GAVN…EAME. Over residues 371–384 the composition is skewed to pro residues; it reads PNFPPPTGGPPPSL. Basic and acidic residues-rich tracts occupy residues 436-462 and 476-506; these read YPRR…RDHS and DEER…EERH. 2 stretches are compositionally biased toward basic residues: residues 520–529 and 538–548; these read KSSRSSSRRR and HRRHKHKKSKR. A compositionally biased stretch (basic and acidic residues) spans 549-562; that stretch reads SKEGKEPSEERSAD.

It belongs to the FIP1 family.

It localises to the nucleus. In terms of biological role, involved in mRNA processing. The chain is Pre-mRNA 3'-end-processing factor FIP1 (fip1l1) from Danio rerio (Zebrafish).